We begin with the raw amino-acid sequence, 140 residues long: HTH-type transcriptional regulator YfmP (140 aa).

Residues 1–73 (MEWMKIDQVA…LQELQHFMET (73 aa)) form the HTH merR-type domain. Positions 6–25 (IDQVAKRSGLTKRTIRFYEE) form a DNA-binding region, H-T-H motif.

Repressor of the yfmOP operon. A mutation in yfmP leads to overexpression of yfmO, probably causing a decrease in cellular copper that is eventually responsible for a reduced copper induction of copZA. This Bacillus subtilis (strain 168) protein is HTH-type transcriptional regulator YfmP (yfmP).